We begin with the raw amino-acid sequence, 25 residues long: SPbeta prophage-derived uncharacterized protein YotF (25 aa).

The chain is SPbeta prophage-derived uncharacterized protein YotF (yotF) from Bacillus subtilis (strain 168).